Here is a 190-residue protein sequence, read N- to C-terminus: MPRLILASTSAYRRQLLSRLQLEFDTGRPEVDEQPQSGEAPSALASRLAAEKAAAVAVRLPGAWVIGSDQVADLDGQALGKPGTRAQAQAQLTAMSGRTVRFHTAVSLIGPERELHALDLTEVQLRALTPAEIERYLDAEPALDCAGSFKCEGLGISLFDAIRSQDPTALVGLPLIALARLLREAGFHLP.

D69 serves as the catalytic Proton acceptor.

This sequence belongs to the Maf family. YceF subfamily. It depends on a divalent metal cation as a cofactor.

It localises to the cytoplasm. It catalyses the reaction N(7)-methyl-GTP + H2O = N(7)-methyl-GMP + diphosphate + H(+). Its function is as follows. Nucleoside triphosphate pyrophosphatase that hydrolyzes 7-methyl-GTP (m(7)GTP). May have a dual role in cell division arrest and in preventing the incorporation of modified nucleotides into cellular nucleic acids. The chain is 7-methyl-GTP pyrophosphatase from Xanthomonas oryzae pv. oryzae (strain MAFF 311018).